The following is an 813-amino-acid chain: Sorting nexin-29 (813 aa).

The RUN domain occupies serine 36–lysine 180. Serine 268, serine 291, serine 292, serine 330, and serine 344 each carry phosphoserine. The disordered stretch occupies residues phenylalanine 269–serine 299. Residues aspartate 346–valine 357 are compositionally biased toward acidic residues. The interval aspartate 346–glutamate 378 is disordered. Serine 445 and serine 450 each carry phosphoserine. Residues threonine 466–valine 545 are a coiled coil. Serine 639 bears the Phosphoserine mark. Position 641 is a phosphothreonine (threonine 641). A phosphoserine mark is found at serine 642 and serine 646. The region spanning alanine 656–glycine 779 is the PX domain. Residues proline 778–leucine 813 are disordered.

It belongs to the sorting nexin family.

In Homo sapiens (Human), this protein is Sorting nexin-29 (SNX29).